The chain runs to 72 residues: Delta-actitoxin-Avd2b 1 (72 aa).

An N-terminal signal peptide occupies residues 1-21; sequence MMNRLLVFLMLGAAFMLVVSA. A propeptide spanning residues 22 to 42 is cleaved from the precursor; the sequence is NDAYGDEPAFKDLNQGDESLG. Cystine bridges form between Cys-47-Cys-62, Cys-48-Cys-56, and Cys-50-Cys-67.

This sequence belongs to the sea anemone short toxin (type III) family.

It localises to the secreted. The protein resides in the nematocyst. Voltage-gated sodium channel (Nav) inhibitor. 1 uM completely inhibits insect voltage-gated sodium channel inactivation (DmNav1 from D.melanogaster). This chain is Delta-actitoxin-Avd2b 1, found in Anemonia viridis (Snakelocks anemone).